We begin with the raw amino-acid sequence, 126 residues long: Fluoride-specific ion channel FluC (126 aa).

4 consecutive transmembrane segments (helical) span residues 4 to 24, 33 to 53, 67 to 87, and 97 to 117; these read PLLSIALGSVLGAWLRWFLGL, IPLGTVTVNLVGGFIIGFAMA, FVITGFCGALTTFSTFSIEIV, and MAMLAISIHLIGSLIFTCLGL. Na(+)-binding residues include G74 and T77.

This sequence belongs to the fluoride channel Fluc/FEX (TC 1.A.43) family.

Its subcellular location is the cell inner membrane. It catalyses the reaction fluoride(in) = fluoride(out). Na(+) is not transported, but it plays an essential structural role and its presence is essential for fluoride channel function. Fluoride-specific ion channel. Important for reducing fluoride concentration in the cell, thus reducing its toxicity. The polypeptide is Fluoride-specific ion channel FluC (Acinetobacter baumannii (strain AB307-0294)).